The chain runs to 221 residues: MGNMQERPSETIDRERKRLVETLQADSGLLLDALVARGVLTGPEYEALDALPDAERRVRRLLLLVQSKGEAACQELLRCAQQTVSMPDPAWDWQHVGPGYRDRSYDPPCPGHWTPEAPSSGTTCPGLPRASEEEEIGGPEDSEAVQPRTPEEPELEAEATKGDEPDLEQEMEPEPEPEVEPEPEPEPEPEPEPEPEPEPEPEPEREPDFQEGDESEGCENT.

The N-myristoyl glycine moiety is linked to residue Gly2. Residues 4–95 (MQERPSETID…MPDPAWDWQH (92 aa)) form the CARD domain. Residues 20-70 (VETLQADSGLLLDALVARGVLTGPEYEALDALPDAERRVRRLLLLVQSKGE) form an essential for interaction with BAX region. The disordered stretch occupies residues 107-221 (PPCPGHWTPE…GDESEGCENT (115 aa)). The span at 132–143 (EEEEIGGPEDSE) shows a compositional bias: acidic residues. Thr149 is subject to Phosphothreonine; by CK2. 2 stretches are compositionally biased toward acidic residues: residues 165-201 (PDLE…EPEP) and 209-221 (FQEG…CENT).

In terms of assembly, oligomerizes (via CARD doamin). Interacts (via CARD domain) with CASP2; inhibits CASP2 activity in a phosphorylation-dependent manner. Interacts with CASP8; decreases CASP8 activity in a mitochondria localization- and phosphorylation-dependent manner and this interaction is dissociated by calcium. Interacts with TFPT; translocates NOL3 into the nucleus and negatively regulated TFPT-induced cell death. Interacts directly (via CARD domain) with FAS and FADD (via DED domain); inhibits death-inducing signaling complex (DISC) assembly by inhibiting the increase in FAS-FADD binding induced by FAS activation. Interacts (via CARD domain) with BAX (via a C-terminal 33 residues); inhibits BAX activation and translocation and consequently cytochrome c release from mitochondria. Interacts with PPM1G; may dephosphorylate NOL3. Interacts (via CARD domain) with BBC3 (via BH3 domain); preventing the association of BBC3 with BCL2 and resulting in activation of CASP8. Interacts (via CARD domain) with BAD(via BH3 domain); preventing the association of BAD with BCL2. Interacts directly (via CARD domain) with TNFRSF1A; inhibits TNF-signaling pathway. Phosphorylation at Thr-149 is required for its antiapoptotic effect by blocking death-inducing signaling complex (DISC) activity through the control of interaction with CASP8. Phosphorylation at Thr-149 results in translocation to mitochondria and this translocation enables the binding to CASP8. Dephosphorylated at Thr-149 by calcineurin; doesn't inhibit the association between FADD and CASP8 and the consequent apoptosis. In terms of processing, polyubiquitinated by MDM2; promoting proteasomal-dependent degradation in response to apoptotic stimuli. As to expression, highly expressed in skeletal muscle, heart and medulla.

It is found in the cytoplasm. Its subcellular location is the mitochondrion. It localises to the sarcoplasmic reticulum. The protein localises to the membrane. In terms of biological role, apoptosis repressor that blocks multiple modes of cell death. Inhibits extrinsic apoptotic pathways through two different ways. Firstly by interacting with FAS and FADD upon FAS activation blocking death-inducing signaling complex (DISC) assembly. Secondly by interacting with CASP8 in a mitochondria localization- and phosphorylation-dependent manner, limiting the amount of soluble CASP8 available for DISC-mediated activation. Inhibits intrinsic apoptotic pathway in response to a wide range of stresses, through its interaction with BAX resulting in BAX inactivation, preventing mitochondrial dysfunction and release of pro-apoptotic factors. Inhibits calcium-mediated cell death by functioning as a cytosolic calcium buffer, dissociating its interaction with CASP8 and maintaining calcium homeostasis. Negatively regulates oxidative stress-induced apoptosis by phosphorylation-dependent suppression of the mitochondria-mediated intrinsic pathway, by blocking CASP2 activation and BAX translocation. Negatively regulates hypoxia-induced apoptosis in part by inhibiting the release of cytochrome c from mitochondria in a caspase-independent manner. Also inhibits TNF-induced necrosis by preventing TNF-signaling pathway through TNFRSF1A interaction abrogating the recruitment of RIPK1 to complex I. Finally through its role as apoptosis repressor, promotes vascular remodeling through inhibition of apoptosis and stimulation of proliferation, in response to hypoxia. Inhibits too myoblast differentiation through caspase inhibition. This is Nucleolar protein 3 (Nol3) from Rattus norvegicus (Rat).